The chain runs to 36 residues: Photosystem I reaction center subunit VIII (36 aa).

Residues 7 to 29 form a helical membrane-spanning segment; the sequence is PSILVPLVGLVFPAITLASLFIY.

Belongs to the PsaI family.

It is found in the plastid. Its subcellular location is the chloroplast thylakoid membrane. Its function is as follows. May help in the organization of the PsaL subunit. This chain is Photosystem I reaction center subunit VIII, found in Anthoceros angustus (Hornwort).